We begin with the raw amino-acid sequence, 1342 residues long: DNA-directed RNA polymerase subunit beta (1342 aa).

Belongs to the RNA polymerase beta chain family. The RNAP catalytic core consists of 2 alpha, 1 beta, 1 beta' and 1 omega subunit. When a sigma factor is associated with the core the holoenzyme is formed, which can initiate transcription.

It carries out the reaction RNA(n) + a ribonucleoside 5'-triphosphate = RNA(n+1) + diphosphate. In terms of biological role, DNA-dependent RNA polymerase catalyzes the transcription of DNA into RNA using the four ribonucleoside triphosphates as substrates. This chain is DNA-directed RNA polymerase subunit beta, found in Salmonella agona (strain SL483).